A 271-amino-acid polypeptide reads, in one-letter code: 3-methyl-2-oxobutanoate hydroxymethyltransferase (271 aa).

Positions 51 and 90 each coordinate Mg(2+). 3-methyl-2-oxobutanoate-binding positions include aspartate 51–serine 52, aspartate 90, and lysine 118. Glutamate 120 provides a ligand contact to Mg(2+). Glutamate 186 functions as the Proton acceptor in the catalytic mechanism.

It belongs to the PanB family. As to quaternary structure, homodecamer; pentamer of dimers. Mg(2+) serves as cofactor.

The protein localises to the cytoplasm. The catalysed reaction is 3-methyl-2-oxobutanoate + (6R)-5,10-methylene-5,6,7,8-tetrahydrofolate + H2O = 2-dehydropantoate + (6S)-5,6,7,8-tetrahydrofolate. It functions in the pathway cofactor biosynthesis; (R)-pantothenate biosynthesis; (R)-pantoate from 3-methyl-2-oxobutanoate: step 1/2. Functionally, catalyzes the reversible reaction in which hydroxymethyl group from 5,10-methylenetetrahydrofolate is transferred onto alpha-ketoisovalerate to form ketopantoate. This chain is 3-methyl-2-oxobutanoate hydroxymethyltransferase, found in Stenotrophomonas maltophilia (strain R551-3).